Here is a 229-residue protein sequence, read N- to C-terminus: Potassium/proton antiporter CemA (229 aa).

4 helical membrane-spanning segments follow: residues 7–27 (FTSL…SLSF), 114–134 (IICF…LVIL), 145–165 (LSDT…IGFH), and 189–209 (ILSS…KFWV).

Belongs to the CemA family.

It is found in the plastid. The protein localises to the chloroplast inner membrane. The enzyme catalyses K(+)(in) + H(+)(out) = K(+)(out) + H(+)(in). Functionally, contributes to K(+)/H(+) antiport activity by supporting proton efflux to control proton extrusion and homeostasis in chloroplasts in a light-dependent manner to modulate photosynthesis. Prevents excessive induction of non-photochemical quenching (NPQ) under continuous-light conditions. Indirectly promotes efficient inorganic carbon uptake into chloroplasts. The polypeptide is Potassium/proton antiporter CemA (Daucus carota (Wild carrot)).